We begin with the raw amino-acid sequence, 625 residues long: FMRFamide-activated amiloride-sensitive sodium channel (625 aa).

The Cytoplasmic portion of the chain corresponds to 1 to 67 (MKYTSAATKP…IVTSRDTKRK (67 aa)). The chain crosses the membrane as a helical span at residues 68 to 89 (VIWALLVIAGFTAATLQLSLLV). At 90 to 536 (RKYLQFQVVE…LADLFADIGG (447 aa)) the chain is on the extracellular side. N-linked (GlcNAc...) asparagine glycans are attached at residues N134, N196, N303, N349, N365, N372, and N473. Residues 537–557 (TLGLWMGISVLTIMELIELVI) form a helical membrane-spanning segment. At 558–625 (RLTGLVFNSE…DFRRGVESPV (68 aa)) the chain is on the cytoplasmic side. Positions 570-591 (LPRGPTTVNNNNGSNNHSQSTS) are disordered. The segment covering 575–591 (TTVNNNNGSNNHSQSTS) has biased composition (low complexity).

The protein belongs to the amiloride-sensitive sodium channel (TC 1.A.6) family. In terms of tissue distribution, muscle and nervous tissue.

Its subcellular location is the membrane. Functionally, FMRFamide-gated ionotropic receptor. The protein is FMRFamide-activated amiloride-sensitive sodium channel of Cornu aspersum (Brown garden snail).